The primary structure comprises 228 residues: Demethylmenaquinone methyltransferase (228 aa).

Residues T62, D80, 100-101 (DA), and S117 each bind S-adenosyl-L-methionine.

Belongs to the class I-like SAM-binding methyltransferase superfamily. MenG/UbiE family.

The catalysed reaction is a 2-demethylmenaquinol + S-adenosyl-L-methionine = a menaquinol + S-adenosyl-L-homocysteine + H(+). It functions in the pathway quinol/quinone metabolism; menaquinone biosynthesis; menaquinol from 1,4-dihydroxy-2-naphthoate: step 2/2. Functionally, methyltransferase required for the conversion of demethylmenaquinol (DMKH2) to menaquinol (MKH2). The protein is Demethylmenaquinone methyltransferase of Mycolicibacterium vanbaalenii (strain DSM 7251 / JCM 13017 / BCRC 16820 / KCTC 9966 / NRRL B-24157 / PYR-1) (Mycobacterium vanbaalenii).